We begin with the raw amino-acid sequence, 1088 residues long: Ran-binding protein 17 (1088 aa).

Position 2 is an N-acetylalanine (A2). The residue at position 569 (S569) is a Phosphoserine.

This sequence belongs to the exportin family. In terms of assembly, binds to nucleoporins and the GTP-bound form of Ran. Highly expressed in primary spermatocytes and very weakly in pancreas.

It is found in the cytoplasm. The protein resides in the nucleus. The protein localises to the nuclear pore complex. Functionally, may function as a nuclear transport receptor. This Mus musculus (Mouse) protein is Ran-binding protein 17 (Ranbp17).